We begin with the raw amino-acid sequence, 582 residues long: DNA mismatch repair protein MutL (582 aa).

It belongs to the DNA mismatch repair MutL/HexB family.

In terms of biological role, this protein is involved in the repair of mismatches in DNA. It is required for dam-dependent methyl-directed DNA mismatch repair. May act as a 'molecular matchmaker', a protein that promotes the formation of a stable complex between two or more DNA-binding proteins in an ATP-dependent manner without itself being part of a final effector complex. The sequence is that of DNA mismatch repair protein MutL from Chlamydia abortus (strain DSM 27085 / S26/3) (Chlamydophila abortus).